Here is a 701-residue protein sequence, read N- to C-terminus: Polyribonucleotide nucleotidyltransferase (701 aa).

D480 and D486 together coordinate Mg(2+). Positions 547 to 606 constitute a KH domain; sequence PKIDTIKIDVDKIKVVIGKGGETIDKIIAETGVKIDIDDEGNVSIYSSDQAAINRTKEII. Positions 616 to 684 constitute an S1 motif domain; the sequence is GEVYHAKVVR…EKGRVDASMK (69 aa). The segment at 682–701 is disordered; it reads SMKALIPRPPKPEKKEEKHD. Positions 691–701 are enriched in basic and acidic residues; it reads PKPEKKEEKHD.

The protein belongs to the polyribonucleotide nucleotidyltransferase family. It depends on Mg(2+) as a cofactor.

Its subcellular location is the cytoplasm. The catalysed reaction is RNA(n+1) + phosphate = RNA(n) + a ribonucleoside 5'-diphosphate. Involved in mRNA degradation. Catalyzes the phosphorolysis of single-stranded polyribonucleotides processively in the 3'- to 5'-direction. The sequence is that of Polyribonucleotide nucleotidyltransferase from Streptococcus pyogenes serotype M12 (strain MGAS2096).